A 272-amino-acid polypeptide reads, in one-letter code: Phosphate import ATP-binding protein PstB 1 (272 aa).

The ABC transporter domain occupies 26 to 267 (LEIRNLDLRY…PKKRKTEDYI (242 aa)). 58–65 (GPSGCGKS) is a binding site for ATP.

It belongs to the ABC transporter superfamily. Phosphate importer (TC 3.A.1.7) family. The complex is composed of two ATP-binding proteins (PstB), two transmembrane proteins (PstC and PstA) and a solute-binding protein (PstS).

It is found in the cell inner membrane. It carries out the reaction phosphate(out) + ATP + H2O = ADP + 2 phosphate(in) + H(+). In terms of biological role, part of the ABC transporter complex PstSACB involved in phosphate import. Responsible for energy coupling to the transport system. The chain is Phosphate import ATP-binding protein PstB 1 from Shewanella oneidensis (strain ATCC 700550 / JCM 31522 / CIP 106686 / LMG 19005 / NCIMB 14063 / MR-1).